The following is a 228-amino-acid chain: Thymidylate kinase (228 aa).

Positions 1–10 are enriched in polar residues; the sequence is MSDSAVQRSS. The tract at residues 1-23 is disordered; the sequence is MSDSAVQRSSGRGRFITFEGGEG. 20–27 contacts ATP; sequence GGEGTGKS.

Belongs to the thymidylate kinase family.

The catalysed reaction is dTMP + ATP = dTDP + ADP. In terms of biological role, phosphorylation of dTMP to form dTDP in both de novo and salvage pathways of dTTP synthesis. The sequence is that of Thymidylate kinase from Bradyrhizobium diazoefficiens (strain JCM 10833 / BCRC 13528 / IAM 13628 / NBRC 14792 / USDA 110).